Here is a 192-residue protein sequence, read N- to C-terminus: Peptidyl-tRNA hydrolase (192 aa).

Residue Tyr-16 coordinates tRNA. Residue His-21 is the Proton acceptor of the active site. TRNA-binding residues include Tyr-66 and Asn-68.

Belongs to the PTH family. In terms of assembly, monomer.

The protein localises to the cytoplasm. It catalyses the reaction an N-acyl-L-alpha-aminoacyl-tRNA + H2O = an N-acyl-L-amino acid + a tRNA + H(+). Hydrolyzes ribosome-free peptidyl-tRNAs (with 1 or more amino acids incorporated), which drop off the ribosome during protein synthesis, or as a result of ribosome stalling. In terms of biological role, catalyzes the release of premature peptidyl moieties from peptidyl-tRNA molecules trapped in stalled 50S ribosomal subunits, and thus maintains levels of free tRNAs and 50S ribosomes. In Aquifex aeolicus (strain VF5), this protein is Peptidyl-tRNA hydrolase.